We begin with the raw amino-acid sequence, 40 residues long: Photosystem II reaction center protein J (40 aa).

Residues 8–28 traverse the membrane as a helical segment; that stretch reads IPLWLVGTVTGTLVIGLMGIF.

This sequence belongs to the PsbJ family. As to quaternary structure, PSII is composed of 1 copy each of membrane proteins PsbA, PsbB, PsbC, PsbD, PsbE, PsbF, PsbH, PsbI, PsbJ, PsbK, PsbL, PsbM, PsbT, PsbX, PsbY, PsbZ, Psb30/Ycf12, at least 3 peripheral proteins of the oxygen-evolving complex and a large number of cofactors. It forms dimeric complexes.

It localises to the plastid. The protein resides in the chloroplast thylakoid membrane. One of the components of the core complex of photosystem II (PSII). PSII is a light-driven water:plastoquinone oxidoreductase that uses light energy to abstract electrons from H(2)O, generating O(2) and a proton gradient subsequently used for ATP formation. It consists of a core antenna complex that captures photons, and an electron transfer chain that converts photonic excitation into a charge separation. In Psilotum nudum (Whisk fern), this protein is Photosystem II reaction center protein J.